The chain runs to 291 residues: Phosphatidylglycerol--prolipoprotein diacylglyceryl transferase (291 aa).

Helical transmembrane passes span 21–41, 60–80, 96–116, 130–150, 198–218, 225–245, and 260–280; these read VALH…MWLA, LLYA…VLFY, WDGG…MIIF, FIAP…FING, SQLY…NLFI, GAVS…VEFF, and ISMG…MMVW. R143 provides a ligand contact to a 1,2-diacyl-sn-glycero-3-phospho-(1'-sn-glycerol).

Belongs to the Lgt family.

It localises to the cell inner membrane. The enzyme catalyses L-cysteinyl-[prolipoprotein] + a 1,2-diacyl-sn-glycero-3-phospho-(1'-sn-glycerol) = an S-1,2-diacyl-sn-glyceryl-L-cysteinyl-[prolipoprotein] + sn-glycerol 1-phosphate + H(+). Its pathway is protein modification; lipoprotein biosynthesis (diacylglyceryl transfer). In terms of biological role, catalyzes the transfer of the diacylglyceryl group from phosphatidylglycerol to the sulfhydryl group of the N-terminal cysteine of a prolipoprotein, the first step in the formation of mature lipoproteins. This Salmonella choleraesuis (strain SC-B67) protein is Phosphatidylglycerol--prolipoprotein diacylglyceryl transferase.